We begin with the raw amino-acid sequence, 317 residues long: Putative HTH-type transcriptional regulatory protein NP_1320A (317 aa).

Residues 132-189 (LSDIRSQEDMSLGKLANELGVSRRTVSKYEDGMSASVEVAAELEEIFDRKLASPVEVL) enclose the HTH cro/C1-type domain. Residues 143–162 (LGKLANELGVSRRTVSKYED) constitute a DNA-binding region (H-T-H motif).

The protein is Putative HTH-type transcriptional regulatory protein NP_1320A of Natronomonas pharaonis (strain ATCC 35678 / DSM 2160 / CIP 103997 / JCM 8858 / NBRC 14720 / NCIMB 2260 / Gabara) (Halobacterium pharaonis).